The sequence spans 245 residues: 1-(5-phosphoribosyl)-5-[(5-phosphoribosylamino)methylideneamino] imidazole-4-carboxamide isomerase (245 aa).

Residue Asp7 is the Proton acceptor of the active site. Catalysis depends on Asp129, which acts as the Proton donor.

It belongs to the HisA/HisF family.

The protein localises to the cytoplasm. The enzyme catalyses 1-(5-phospho-beta-D-ribosyl)-5-[(5-phospho-beta-D-ribosylamino)methylideneamino]imidazole-4-carboxamide = 5-[(5-phospho-1-deoxy-D-ribulos-1-ylimino)methylamino]-1-(5-phospho-beta-D-ribosyl)imidazole-4-carboxamide. It participates in amino-acid biosynthesis; L-histidine biosynthesis; L-histidine from 5-phospho-alpha-D-ribose 1-diphosphate: step 4/9. In Buchnera aphidicola subsp. Cinara cedri (strain Cc), this protein is 1-(5-phosphoribosyl)-5-[(5-phosphoribosylamino)methylideneamino] imidazole-4-carboxamide isomerase.